The chain runs to 490 residues: uncharacterized protein (490 aa).

A compositionally biased stretch (low complexity) spans 370–385 (FSMKRPSSSSSSLSGS). The segment at 370 to 406 (FSMKRPSSSSSSLSGSWHGDTENSVKQSLASPSEASL) is disordered. Positions 391–406 (ENSVKQSLASPSEASL) are enriched in polar residues.

Its subcellular location is the cytoplasm. The protein localises to the nucleus. This is an uncharacterized protein from Schizosaccharomyces pombe (strain 972 / ATCC 24843) (Fission yeast).